Here is a 1169-residue protein sequence, read N- to C-terminus: DNA-directed RNA polymerase subunit beta (1169 aa).

The protein belongs to the RNA polymerase beta chain family. The RNAP catalytic core consists of 2 alpha, 1 beta, 1 beta' and 1 omega subunit. When a sigma factor is associated with the core the holoenzyme is formed, which can initiate transcription. Interacts with RbpA, which partially restores Rif-inhibited transcription.

It carries out the reaction RNA(n) + a ribonucleoside 5'-triphosphate = RNA(n+1) + diphosphate. Its function is as follows. DNA-dependent RNA polymerase catalyzes the transcription of DNA into RNA using the four ribonucleoside triphosphates as substrates. This subunit often mutates to generate rifampicin (Rif) resistance. Interaction with RbpA partially restores Rif-inhibited transcription; once the subunit is Rif-resistant however RbpA no longer stimulates transcription. The polypeptide is DNA-directed RNA polymerase subunit beta (Mycolicibacterium smegmatis (strain ATCC 700084 / mc(2)155) (Mycobacterium smegmatis)).